The chain runs to 20 residues: Alpha-basrubrin (20 aa).

The span at 1–13 (GADFQECMKEHSQ) shows a compositional bias: basic and acidic residues. The interval 1 to 20 (GADFQECMKEHSQKQHQHQG) is disordered.

Its function is as follows. Possesses antifungal activity against B.cinerea, M.arachidicola and F.oxysporum but not C.comatus and R.solani. Inhibits HIV-1 reverse transcriptase and cell-free translation. This is Alpha-basrubrin from Basella alba (Malabar spinach).